A 127-amino-acid polypeptide reads, in one-letter code: uncharacterized protein (127 aa).

A helical membrane pass occupies residues 91-113 (IYLIVSIAVSILAIIAFFIFLML).

Its subcellular location is the membrane. This is an uncharacterized protein from Bacillus subtilis (strain 168).